The chain runs to 126 residues: Histone H2B.5 (126 aa).

Residues 1–27 show a composition bias toward basic and acidic residues; the sequence is MAPKAEKKPSEKAPKADKKITKEGGSE. The tract at residues 1 to 34 is disordered; the sequence is MAPKAEKKPSEKAPKADKKITKEGGSERKKKTKK. Residue Ala2 is modified to N,N,N-trimethylalanine; alternate. N,N-dimethylalanine; alternate is present on Ala2. N-methylalanine; alternate is present on Ala2. The residue at position 4 (Lys4) is an N6-methyllysine. Residues Lys7, Lys12, Lys18, and Lys19 each carry the N6-acetyllysine modification. A Glycyl lysine isopeptide (Lys-Gly) (interchain with G-Cter in ubiquitin) cross-link involves residue Lys122.

The protein belongs to the histone H2B family. In terms of assembly, the nucleosome is a histone octamer containing two molecules each of H2A, H2B, H3 and H4 assembled in one H3-H4 heterotetramer and two H2A-H2B heterodimers. The octamer wraps approximately 147 bp of DNA. Can be acetylated to form H2BK6ac, H2BK33ac and H2BK34ac. Post-translationally, monoubiquitinated by BRE1 to form H2BK143ub1 and deubiquitinated by UBP26. Required for heterochromatic histone H3 di- and trimethylation at H3K4me. May give a specific tag for epigenetic transcriptional activation.

The protein localises to the nucleus. It is found in the chromosome. Functionally, core component of nucleosome. Nucleosomes wrap and compact DNA into chromatin, limiting DNA accessibility to the cellular machineries which require DNA as a template. Histones thereby play a central role in transcription regulation, DNA repair, DNA replication and chromosomal stability. DNA accessibility is regulated via a complex set of post-translational modifications of histones, also called histone code, and nucleosome remodeling. In Arabidopsis thaliana (Mouse-ear cress), this protein is Histone H2B.5.